The primary structure comprises 329 residues: Minor capsid protein A1 (329 aa).

It localises to the virion. Its function is as follows. Minor capsid protein. This is Minor capsid protein A1 from Escherichia coli (Bacteriophage Q-beta).